Reading from the N-terminus, the 106-residue chain is UPF0060 membrane protein AZC_0909 (106 aa).

A run of 4 helical transmembrane segments spans residues 4 to 24 (PLFA…WHVV), 27 to 47 (GGSP…AALL), 58 to 78 (AFAA…WAAE), and 84 to 104 (RFDA…LFAP).

Belongs to the UPF0060 family.

The protein localises to the cell inner membrane. The protein is UPF0060 membrane protein AZC_0909 of Azorhizobium caulinodans (strain ATCC 43989 / DSM 5975 / JCM 20966 / LMG 6465 / NBRC 14845 / NCIMB 13405 / ORS 571).